Reading from the N-terminus, the 484-residue chain is Glycogen synthase (484 aa).

ADP-alpha-D-glucose is bound at residue lysine 15.

It belongs to the glycosyltransferase 1 family. Bacterial/plant glycogen synthase subfamily.

It catalyses the reaction [(1-&gt;4)-alpha-D-glucosyl](n) + ADP-alpha-D-glucose = [(1-&gt;4)-alpha-D-glucosyl](n+1) + ADP + H(+). It participates in glycan biosynthesis; glycogen biosynthesis. Functionally, synthesizes alpha-1,4-glucan chains using ADP-glucose. This chain is Glycogen synthase (glgA), found in Bacillus subtilis (strain 168).